Here is an 893-residue protein sequence, read N- to C-terminus: UPF0182 protein CLI_0022 (893 aa).

The next 7 helical transmembrane spans lie at 9-29 (IPLF…NFII), 49-69 (AIII…WMYY), 94-114 (LFFI…SSSY), 154-174 (VIIS…FILE), 202-222 (LAIV…IKIW), 246-266 (FYKI…LSIV), and 273-293 (VSIC…ASFL).

This sequence belongs to the UPF0182 family.

It localises to the cell membrane. This Clostridium botulinum (strain Langeland / NCTC 10281 / Type F) protein is UPF0182 protein CLI_0022.